Reading from the N-terminus, the 52-residue chain is Insulin (52 aa).

3 disulfides stabilise this stretch: cysteine 7–cysteine 38, cysteine 19–cysteine 51, and cysteine 37–cysteine 42.

Belongs to the insulin family. In terms of assembly, heterodimer of a B chain and an A chain linked by two disulfide bonds.

Its subcellular location is the secreted. Functionally, insulin decreases blood glucose concentration. It increases cell permeability to monosaccharides, amino acids and fatty acids. It accelerates glycolysis, the pentose phosphate cycle, and glycogen synthesis in liver. The polypeptide is Insulin (ins) (Polypterus senegalus (Senegal bichir)).